The sequence spans 177 residues: Ribonuclease M5 (177 aa).

Residues 5–99 (KQIIIVEGKT…NKTSKKIGIA (95 aa)) form the Toprim domain. Mg(2+) is bound by residues Glu11, Asp59, and Asp61.

This sequence belongs to the ribonuclease M5 family. Mg(2+) serves as cofactor.

It localises to the cytoplasm. It carries out the reaction Endonucleolytic cleavage of RNA, removing 21 and 42 nucleotides, respectively, from the 5'- and 3'-termini of a 5S-rRNA precursor.. In terms of biological role, required for correct processing of both the 5' and 3' ends of 5S rRNA precursor. Cleaves both sides of a double-stranded region yielding mature 5S rRNA in one step. The polypeptide is Ribonuclease M5 (Mycoplasma mycoides subsp. mycoides SC (strain CCUG 32753 / NCTC 10114 / PG1)).